The sequence spans 37 residues: Large ribosomal subunit protein bL36 (37 aa).

The protein belongs to the bacterial ribosomal protein bL36 family.

In Halothermothrix orenii (strain H 168 / OCM 544 / DSM 9562), this protein is Large ribosomal subunit protein bL36.